We begin with the raw amino-acid sequence, 141 residues long: Putative nickel-responsive regulator (141 aa).

His80, His91, His93, and Cys99 together coordinate Ni(2+).

This sequence belongs to the transcriptional regulatory CopG/NikR family. Ni(2+) serves as cofactor.

Its function is as follows. Transcriptional regulator. The protein is Putative nickel-responsive regulator of Methanococcus maripaludis (strain C5 / ATCC BAA-1333).